The following is a 158-amino-acid chain: EOLA-like protein (158 aa).

The ASCH domain maps to 6 to 92; it reads LSFRQPYAGF…IAGLVDIGET (87 aa).

It belongs to the EOLA family.

The sequence is that of EOLA-like protein from Pongo abelii (Sumatran orangutan).